Consider the following 482-residue polypeptide: UDP-N-acetylmuramate--L-alanine ligase (482 aa).

ATP is bound at residue 129–135 (GTHGKTT).

This sequence belongs to the MurCDEF family.

Its subcellular location is the cytoplasm. It catalyses the reaction UDP-N-acetyl-alpha-D-muramate + L-alanine + ATP = UDP-N-acetyl-alpha-D-muramoyl-L-alanine + ADP + phosphate + H(+). Its pathway is cell wall biogenesis; peptidoglycan biosynthesis. Its function is as follows. Cell wall formation. In Acinetobacter baumannii (strain SDF), this protein is UDP-N-acetylmuramate--L-alanine ligase.